The following is a 276-amino-acid chain: NAD kinase (276 aa).

The active-site Proton acceptor is the aspartate 61. Residues 61–62 (DG), 134–135 (ND), arginine 145, lysine 162, aspartate 164, valine 172, 175–180 (TAYSFS), and glutamine 234 each bind NAD(+).

This sequence belongs to the NAD kinase family. Requires a divalent metal cation as cofactor.

It is found in the cytoplasm. The catalysed reaction is NAD(+) + ATP = ADP + NADP(+) + H(+). In terms of biological role, involved in the regulation of the intracellular balance of NAD and NADP, and is a key enzyme in the biosynthesis of NADP. Catalyzes specifically the phosphorylation on 2'-hydroxyl of the adenosine moiety of NAD to yield NADP. The chain is NAD kinase from Clostridium perfringens (strain ATCC 13124 / DSM 756 / JCM 1290 / NCIMB 6125 / NCTC 8237 / Type A).